A 287-amino-acid polypeptide reads, in one-letter code: Large ribosomal subunit protein uL2 (287 aa).

The segment at 214–287 (LGRRPEVRGS…SKRGRGGRDA (74 aa)) is disordered. Basic residues predominate over residues 271–287 (QRRRRKSSKRGRGGRDA).

This sequence belongs to the universal ribosomal protein uL2 family. As to quaternary structure, part of the 50S ribosomal subunit. Forms a bridge to the 30S subunit in the 70S ribosome.

Functionally, one of the primary rRNA binding proteins. Required for association of the 30S and 50S subunits to form the 70S ribosome, for tRNA binding and peptide bond formation. It has been suggested to have peptidyltransferase activity; this is somewhat controversial. Makes several contacts with the 16S rRNA in the 70S ribosome. The polypeptide is Large ribosomal subunit protein uL2 (Synechococcus elongatus (strain ATCC 33912 / PCC 7942 / FACHB-805) (Anacystis nidulans R2)).